The sequence spans 121 residues: Spermidine export protein MdtJ (121 aa).

4 consecutive transmembrane segments (helical) span residues 1–21 (MYIYWILLGLAIATEITGTLS), 32–52 (GGFILMLVMISLSYIFLSFAV), 55–75 (IALGVAYALWEGIGILFITLF), and 82–102 (ESLSLMKIAGLTTLVAGIVLI).

This sequence belongs to the drug/metabolite transporter (DMT) superfamily. Small multidrug resistance (SMR) (TC 2.A.7.1) family. MdtJ subfamily. In terms of assembly, forms a complex with MdtI.

It is found in the cell inner membrane. Functionally, catalyzes the excretion of spermidine. This is Spermidine export protein MdtJ from Escherichia coli O139:H28 (strain E24377A / ETEC).